A 365-amino-acid chain; its full sequence is Zinc transporter 7 (365 aa).

The signal sequence occupies residues 1–26 (MAYSKACYKLTTITILLLSFTLPSLA). Residues 27-56 (GNAENADVSECKAESGDLSCHNNKEAQKLK) are Extracellular-facing. The helical transmembrane segment at 57–77 (IIAIPSILVASMIGVSLPLFS) threads the bilayer. The Cytoplasmic segment spans residues 78–90 (RSIPALGPDREMS). The helical transmembrane segment at 91 to 111 (VIVKTLASGVILATGFMHVLP) threads the bilayer. Residues 112–129 (DSFDDLTSKCLPEDPWQK) are Extracellular-facing. The chain crosses the membrane as a helical span at residues 130-150 (FPFATFITMISALLVLMIESF). The Cytoplasmic portion of the chain corresponds to 151-210 (AMCAYARRTSKREGEVVPLENGSNSVDTQNDIQTLENGSSYVEKQEKVNEDKTSELLRNK). A helical transmembrane segment spans residues 211–231 (VIAQILELGIVVHSVVIGLAM). Over 232–242 (GASDNKCTVQS) the chain is Extracellular. A helical membrane pass occupies residues 243–263 (LIAALCFHQLFEGMGLGGSIL). The Cytoplasmic segment spans residues 264-272 (QAQFKSKTN). The chain crosses the membrane as a helical span at residues 273-293 (WTMVFFFSVTTPFGIVLGMAI). The Extracellular portion of the chain corresponds to 294–304 (QKIYDETSPTA). The chain crosses the membrane as a helical span at residues 305–325 (LIVVGVLNACSAGLLIYMALV). The Cytoplasmic portion of the chain corresponds to 326–344 (NLLAHEFFGPKIQGNIKLH). A helical transmembrane segment spans residues 345 to 365 (VLGYVATFTGAAGMSLMAKWA).

It belongs to the ZIP transporter (TC 2.A.5) family.

It is found in the cell membrane. Probably mediates zinc uptake from the rhizosphere. The protein is Zinc transporter 7 (ZIP7) of Arabidopsis thaliana (Mouse-ear cress).